The sequence spans 122 residues: Large ribosomal subunit protein uL14 (122 aa).

Belongs to the universal ribosomal protein uL14 family. As to quaternary structure, part of the 50S ribosomal subunit. Forms a cluster with proteins L3 and L19. In the 70S ribosome, L14 and L19 interact and together make contacts with the 16S rRNA in bridges B5 and B8.

Functionally, binds to 23S rRNA. Forms part of two intersubunit bridges in the 70S ribosome. The protein is Large ribosomal subunit protein uL14 of Buchnera aphidicola subsp. Acyrthosiphon pisum (strain 5A).